Reading from the N-terminus, the 160-residue chain is Cytochrome c-type biogenesis protein CcmE (160 aa).

Residues 1 to 8 (MSAPRKTR) lie on the Cytoplasmic side of the membrane. A helical; Signal-anchor for type II membrane protein membrane pass occupies residues 9-29 (LYAILAVICGAVLTVALTLYA). Topologically, residues 30–160 (LSSNIDLFYT…PAAVTEGKRL (131 aa)) are periplasmic. Residues His130 and Tyr134 each contribute to the heme site.

This sequence belongs to the CcmE/CycJ family.

It localises to the cell inner membrane. Its function is as follows. Heme chaperone required for the biogenesis of c-type cytochromes. Transiently binds heme delivered by CcmC and transfers the heme to apo-cytochromes in a process facilitated by CcmF and CcmH. This Pectobacterium carotovorum subsp. carotovorum (strain PC1) protein is Cytochrome c-type biogenesis protein CcmE.